A 119-amino-acid chain; its full sequence is Small ribosomal subunit protein uS13m (119 aa).

Belongs to the universal ribosomal protein uS13 family. In terms of assembly, component of the mitochondrial small ribosomal subunit (mt-SSU). Mature N.crassa 74S mitochondrial ribosomes consist of a small (37S) and a large (54S) subunit. The 37S small subunit contains a 16S ribosomal RNA (16S mt-rRNA) and 32 different proteins. The 54S large subunit contains a 23S rRNA (23S mt-rRNA) and 42 different proteins.

It localises to the mitochondrion. Component of the mitochondrial ribosome (mitoribosome), a dedicated translation machinery responsible for the synthesis of mitochondrial genome-encoded proteins, including at least some of the essential transmembrane subunits of the mitochondrial respiratory chain. The mitoribosomes are attached to the mitochondrial inner membrane and translation products are cotranslationally integrated into the membrane. The sequence is that of Small ribosomal subunit protein uS13m (sws2) from Neurospora crassa (strain ATCC 24698 / 74-OR23-1A / CBS 708.71 / DSM 1257 / FGSC 987).